Reading from the N-terminus, the 115-residue chain is NADH-ubiquinone oxidoreductase chain 3 (115 aa).

A run of 3 helical transmembrane segments spans residues Phe-3 to Trp-23, Phe-55 to Leu-75, and Leu-84 to Tyr-104.

This sequence belongs to the complex I subunit 3 family. Core subunit of respiratory chain NADH dehydrogenase (Complex I) which is composed of 45 different subunits. Interacts with TMEM186. Interacts with TMEM242.

The protein resides in the mitochondrion inner membrane. The enzyme catalyses a ubiquinone + NADH + 5 H(+)(in) = a ubiquinol + NAD(+) + 4 H(+)(out). Its function is as follows. Core subunit of the mitochondrial membrane respiratory chain NADH dehydrogenase (Complex I) which catalyzes electron transfer from NADH through the respiratory chain, using ubiquinone as an electron acceptor. Essential for the catalytic activity of complex I. This Homo sapiens (Human) protein is NADH-ubiquinone oxidoreductase chain 3.